Here is a 415-residue protein sequence, read N- to C-terminus: Esterase FrsA (415 aa).

The protein belongs to the FrsA family.

The catalysed reaction is a carboxylic ester + H2O = an alcohol + a carboxylate + H(+). In terms of biological role, catalyzes the hydrolysis of esters. This is Esterase FrsA from Yersinia pseudotuberculosis serotype O:1b (strain IP 31758).